The chain runs to 244 residues: Proteasome subunit alpha type-5 (244 aa).

The protein belongs to the peptidase T1A family. The 26S proteasome consists of a 20S proteasome core and two 19S regulatory subunits. The 20S proteasome core is composed of 28 subunits that are arranged in four stacked rings, resulting in a barrel-shaped structure. The two end rings are each formed by seven alpha subunits, and the two central rings are each formed by seven beta subunits. The catalytic chamber with the active sites is on the inside of the barrel.

Its subcellular location is the cytoplasm. The protein localises to the nucleus. Functionally, the proteasome is a multicatalytic proteinase complex which is characterized by its ability to cleave peptides with Arg, Phe, Tyr, Leu, and Glu adjacent to the leaving group at neutral or slightly basic pH. The proteasome has an ATP-dependent proteolytic activity. The polypeptide is Proteasome subunit alpha type-5 (Prosalpha5) (Drosophila melanogaster (Fruit fly)).